Reading from the N-terminus, the 480-residue chain is Cytochrome P450 monooxygenase ORF11 (480 aa).

A helical transmembrane segment spans residues 9-29 (LLLLPHLSALTPKTGFLIGLA). N-linked (GlcNAc...) asparagine glycans are attached at residues Asn-265 and Asn-352. Cys-449 contacts heme.

This sequence belongs to the cytochrome P450 family. Heme is required as a cofactor.

It is found in the membrane. It functions in the pathway sesquiterpene biosynthesis. In terms of biological role, cytochrome P450 monooxygenase; part of the gene cluster that mediates the biosynthesis of PR-toxin, a bicyclic sesquiterpene belonging to the eremophilane class and acting as a mycotoxin. The first step of the pathway is catalyzed by the aristolochene synthase which performs the cyclization of trans,trans-farnesyl diphosphate (FPP) to the bicyclic sesquiterpene aristolochene. Following the formation of aristolochene, the non-oxygenated aristolochene is converted to the trioxygenated intermediate eremofortin B, via 7-epi-neopetasone. This conversion appears to involve three enzymes, a hydroxysterol oxidase-like enzyme, the quinone-oxidase prx3 that forms the quinone-type-structure in the bicyclic nucleus of aristolochene with the C8-oxo group and the C-3 hydroxyl group, and the P450 monooxygenase ORF6 that introduces the epoxide at the double bond between carbons 1 and 2. No monoxy or dioxy-intermediates have been reported to be released to the broth, so these three early oxidative reactions may be coupled together. Eremofortin B is further oxidized by another P450 monooxygenase, that introduces a second epoxide between carbons 7 and 11 prior to acetylation to eremofortin A by the acetyltransferase ORF8. The second epoxidation may be performed by a second P450 monooxygenase. After the acetylation step, eremofortin A is converted to eremofortin C and then to PR-toxin. First the conversion of eremofortin A to eremofortin C proceeds by oxidation of the side chain of the molecule at C-12 and is catalyzed by the short-chain oxidoreductase prx1. The cytochrome P450 monooxygenase ORF6 is probably also involved in this step. The primary alcohol formed at C-12 is finally oxidized by the short-chain alcohol dehydrogenase prx4 that forms PR-toxin. This is Cytochrome P450 monooxygenase ORF11 from Penicillium roqueforti (strain FM164).